A 271-amino-acid polypeptide reads, in one-letter code: Glutamate racemase (271 aa).

Residues 10–11 (DS) and 42–43 (YG) contribute to the substrate site. The active-site Proton donor/acceptor is Cys73. 74-75 (NT) contacts substrate. Catalysis depends on Cys183, which acts as the Proton donor/acceptor. 184 to 185 (TH) is a binding site for substrate.

This sequence belongs to the aspartate/glutamate racemases family.

The enzyme catalyses L-glutamate = D-glutamate. The protein operates within cell wall biogenesis; peptidoglycan biosynthesis. Its function is as follows. Provides the (R)-glutamate required for cell wall biosynthesis. This Lactococcus lactis subsp. lactis (strain IL1403) (Streptococcus lactis) protein is Glutamate racemase.